The chain runs to 170 residues: Photosystem I assembly protein Ycf3 (170 aa).

TPR repeat units follow at residues 35–68, 72–105, and 120–153; these read AFTYYRDGMLAQSEGNYAEALQNYYEATRLEIDP, SYILYNIGLIHTSNGEHTKALEYYFRALERNPFL, and GEQAILQGDSEIAEAWFDQAAEYWKQAIALTPGN.

This sequence belongs to the Ycf3 family.

It localises to the plastid. It is found in the chloroplast thylakoid membrane. In terms of biological role, essential for the assembly of the photosystem I (PSI) complex. May act as a chaperone-like factor to guide the assembly of the PSI subunits. This chain is Photosystem I assembly protein Ycf3, found in Saccharum officinarum (Sugarcane).